Reading from the N-terminus, the 158-residue chain is Snaclec convulxin subunit alpha (158 aa).

An N-terminal signal peptide occupies residues 1–23 (MGRFIFVSFGLLVLFLSLSGTGA). Cystine bridges form between Cys-27–Cys-38, Cys-55–Cys-152, and Cys-127–Cys-144. Positions 34–158 (YDQHCYRIFN…PFVCKFPPQC (125 aa)) constitute a C-type lectin domain.

Belongs to the snaclec family. As to quaternary structure, tetramer of heterodimers of alpha and beta subunits (alphabeta)(4); disulfide-linked. In terms of tissue distribution, expressed by the venom gland.

It localises to the secreted. Its function is as follows. Snake venom lectin that activates platelets by binding to the platelet collagen receptor glycoprotein VI (GP6). The indirect activation of integrin alpha-IIb/beta-3 (ITGA2B/ITGB3) also induced by the toxin is upstream the cytoskeletal translocation of GPIb, FcRgamma (FCER1G) and 14-3-3zeta (YWHAZ). This is Snaclec convulxin subunit alpha from Crotalus durissus terrificus (South American rattlesnake).